The sequence spans 600 residues: ATP-dependent ubiquitin transferase-like protein Cap2 (600 aa).

The segment at 1 to 158 is E2-like domain; sequence MSTVVQQVPA…QEKLATTGDA (158 aa). Catalysis depends on Cys-109, which acts as the For E2-like domain. The segment at 159 to 373 is linker domain; the sequence is VELPAFPDQS…DQLRTRGEAA (215 aa). Residues 375–600 are adenylation plus E1-like domain; that stretch reads DIRSKKVLII…GTVEKEPHEY (226 aa). Catalysis depends on Cys-548, which acts as the For E1-like domain.

The protein in the C-terminal section; belongs to the HesA/MoeB/ThiF family. In terms of assembly, crystallizes as a Cap2 homodimer bound on each side by a CdnD monomer.

Its function is as follows. CD-NTase priming component of a CBASS antiviral system. CBASS (cyclic oligonucleotide-based antiphage signaling system) provides immunity against bacteriophages. The CD-NTase protein (CdnD) synthesizes cyclic nucleotides in response to infection; these serve as specific second messenger signals. The signals activate a diverse range of effectors, leading to bacterial cell death and thus abortive phage infection. A type II-C(AAG) CBASS system. In terms of biological role, primes CdnD; acts as a protein transferase, conjugating CdnD, the CD-NTase, to unidentified target(s) in the cell via an E1-E2 ubiquitin transferase-like mechanism. Upon phage infection CdnD activates and makes cyclic nucleotides. During the conjugation reaction CdnD is transiently attached to AMP. Protein conjugation requires ATP. Protects E.coli against phage T2 infection. When the cdnD-cap2-cap3-cap4 operon is introduced in E.coli there is a more than 10(3) decrease in the efficiency of T2 plaque formation. The operon does not protect against phage T5 and only about 10-fold against T7. This Enterobacter hormaechei subsp. hoffmannii (strain UCI 50) protein is ATP-dependent ubiquitin transferase-like protein Cap2.